The following is a 70-amino-acid chain: MPGAMKIFVFILAALILLAQIFQARTAIHRALISKRMEGHCEAECLTFEVKIGGCRAELAPFCCKNRKKH.

Positions 1 to 26 (MPGAMKIFVFILAALILLAQIFQART) are cleaved as a signal peptide. Disulfide bonds link Cys-41-Cys-55 and Cys-45-Cys-64.

The protein belongs to the beta-defensin family. Specifically expressed in testis.

It is found in the secreted. Functionally, has antibacterial activity. In Homo sapiens (Human), this protein is Beta-defensin 107 (DEFB107A).